Here is a 282-residue protein sequence, read N- to C-terminus: Para-Rep C1 (282 aa).

The CRESS-DNA virus Rep endonuclease domain maps to 1-99; it reads MASKRWCFTL…ETLISEIGAP (99 aa). The short motif at 7-10 is the RCR-1 element; sequence CFTL. Residues glutamate 38 and histidine 47 each contribute to the a divalent metal cation site. The short motif at 47-49 is the RCR-2 element; it reads HLQ. Residues 56–77 carry the Nuclear localization signal motif; that stretch reads KMIRLGGLKKKFGYRAHWEIAK. Tyrosine 86 serves as the catalytic For DNA cleavage activity. The short motif at 86 to 89 is the RCR-3 element; sequence YCTK. Residue serine 94 participates in a divalent metal cation binding. Residue 174–182 coordinates ATP; sequence GSDGGEGKS.

The protein belongs to the nanoviridea/circoviridae replication-associated protein family. Homooligomer (Potential). Rep binds to repeated DNA motifs (iterons). Mg(2+) serves as cofactor. Mn(2+) is required as a cofactor.

The protein resides in the host nucleus. It carries out the reaction ATP + H2O = ADP + phosphate + H(+). Functionally, initiates and terminates the replication only of its own subviral DNA molecule. The closed circular ssDNA genome is first converted to a superhelical dsDNA. Rep binds a specific hairpin at the genome origin of replication. Introduces an endonucleolytic nick within the intergenic region of the genome, thereby initiating the rolling circle replication (RCR). Following cleavage, binds covalently to the 5'-phosphate of DNA as a tyrosyl ester. The cleavage gives rise to a free 3'-OH that serves as a primer for the cellular DNA polymerase. The polymerase synthesizes the (+) strand DNA by rolling circle mechanism. After one round of replication, a Rep-catalyzed nucleotidyl transfer reaction releases a circular single-stranded virus genome, thereby terminating the replication. Displays origin-specific DNA cleavage, nucleotidyl transferase, ATPase and helicase activities. This Faba bean necrotic yellows C11 alphasatellite (FBNYC11A) protein is Para-Rep C1 (C1).